Consider the following 152-residue polypeptide: Protein SprT-like (152 aa).

In terms of domain architecture, SprT-like spans 7–147; the sequence is QRLVEEVSLQ…CGKCKGKLKP (141 aa). Zn(2+) is bound at residue H67. E68 is a catalytic residue. H71 serves as a coordination point for Zn(2+).

The protein belongs to the SprT family. The cofactor is Zn(2+).

It is found in the cytoplasm. The chain is Protein SprT-like from Bacillus cereus (strain B4264).